Reading from the N-terminus, the 238-residue chain is Probable transcriptional regulatory protein CF0838 (238 aa).

This sequence belongs to the TACO1 family.

Its subcellular location is the cytoplasm. The sequence is that of Probable transcriptional regulatory protein CF0838 from Chlamydia felis (strain Fe/C-56) (Chlamydophila felis).